The sequence spans 870 residues: DNA mismatch repair protein MutS (870 aa).

Position 621–628 (621–628 (GPNMAGKS)) interacts with ATP. Positions 813-834 (GAPRIAKSRRQRTPDPSPQFSL) are disordered.

Belongs to the DNA mismatch repair MutS family.

This protein is involved in the repair of mismatches in DNA. It is possible that it carries out the mismatch recognition step. This protein has a weak ATPase activity. The sequence is that of DNA mismatch repair protein MutS from Pelobacter propionicus (strain DSM 2379 / NBRC 103807 / OttBd1).